Here is a 368-residue protein sequence, read N- to C-terminus: Protein-glutamate methylesterase/protein-glutamine glutaminase (368 aa).

One can recognise a Response regulatory domain in the interval 9–126 (RVLVVDDSAF…SINMRELKDE (118 aa)). At aspartate 60 the chain carries 4-aspartylphosphate. The CheB-type methylesterase domain occupies 161–354 (SVPARIAVAI…ETVVRAVEMI (194 aa)). Residues serine 173, histidine 200, and aspartate 296 contribute to the active site.

This sequence belongs to the CheB family. Post-translationally, phosphorylated by CheA. Phosphorylation of the N-terminal regulatory domain activates the methylesterase activity.

Its subcellular location is the cytoplasm. The catalysed reaction is [protein]-L-glutamate 5-O-methyl ester + H2O = L-glutamyl-[protein] + methanol + H(+). It carries out the reaction L-glutaminyl-[protein] + H2O = L-glutamyl-[protein] + NH4(+). Involved in chemotaxis. Part of a chemotaxis signal transduction system that modulates chemotaxis in response to various stimuli. Catalyzes the demethylation of specific methylglutamate residues introduced into the chemoreceptors (methyl-accepting chemotaxis proteins or MCP) by CheR. Also mediates the irreversible deamidation of specific glutamine residues to glutamic acid. The chain is Protein-glutamate methylesterase/protein-glutamine glutaminase from Pyrococcus abyssi (strain GE5 / Orsay).